Here is a 96-residue protein sequence, read N- to C-terminus: Protein Vpr (96 aa).

Residues 1 to 42 (MEQAPEDQGPQREPYNEWTIEILEELKREAVRHFPRPWLHDL) are homooligomerization. Phosphoserine; by host occurs at positions 79, 94, and 96.

This sequence belongs to the HIV-1 VPR protein family. In terms of assembly, homooligomer, may form homodimer. Interacts with p6-gag region of the Pr55 Gag precursor protein through a (Leu-X-X)4 motif near the C-terminus of the P6gag protein. Interacts with host UNG. May interact with host RAD23A/HHR23A. Interacts with host VPRBP/DCAF1, leading to hijack the CUL4A-RBX1-DDB1-DCAF1/VPRBP complex, mediating ubiquitination of host proteins such as TERT and ZGPAT and arrest of the cell cycle in G2 phase. Phosphorylated on several residues by host. These phosphorylations regulate VPR activity for the nuclear import of the HIV-1 pre-integration complex.

Its subcellular location is the virion. It is found in the host nucleus. The protein localises to the host extracellular space. During virus replication, may deplete host UNG protein, and incude G2-M cell cycle arrest. Acts by targeting specific host proteins for degradation by the 26S proteasome, through association with the cellular CUL4A-DDB1 E3 ligase complex by direct interaction with host VPRPB/DCAF-1. Cell cycle arrest reportedly occurs within hours of infection and is not blocked by antiviral agents, suggesting that it is initiated by the VPR carried into the virion. Additionally, VPR induces apoptosis in a cell cycle dependent manner suggesting that these two effects are mechanistically linked. Detected in the serum and cerebrospinal fluid of AIDS patient, VPR may also induce cell death to bystander cells. In terms of biological role, during virus entry, plays a role in the transport of the viral pre-integration (PIC) complex to the host nucleus. This function is crucial for viral infection of non-dividing macrophages. May act directly at the nuclear pore complex, by binding nucleoporins phenylalanine-glycine (FG)-repeat regions. The polypeptide is Protein Vpr (Human immunodeficiency virus type 1 group M subtype K (isolate 97ZR-EQTB11) (HIV-1)).